A 31-amino-acid polypeptide reads, in one-letter code: Cytochrome b6-f complex subunit 6 (31 aa).

Residues 4–26 (ITSYFGFLLAASTITPALFIGLS) form a helical membrane-spanning segment.

Belongs to the PetL family. In terms of assembly, the 4 large subunits of the cytochrome b6-f complex are cytochrome b6, subunit IV (17 kDa polypeptide, PetD), cytochrome f and the Rieske protein, while the 4 small subunits are PetG, PetL, PetM and PetN. The complex functions as a dimer.

It is found in the plastid. It localises to the chloroplast thylakoid membrane. Component of the cytochrome b6-f complex, which mediates electron transfer between photosystem II (PSII) and photosystem I (PSI), cyclic electron flow around PSI, and state transitions. PetL is important for photoautotrophic growth as well as for electron transfer efficiency and stability of the cytochrome b6-f complex. This is Cytochrome b6-f complex subunit 6 from Buxus microphylla (Littleleaf boxwood).